The primary structure comprises 290 residues: Enoyl-CoA hydratase, mitochondrial (290 aa).

Residues 1–27 constitute a mitochondrion transit peptide; that stretch reads MAALRALLPRVRAPLRPWLFCPVQRSF. Residues 98 to 101 and Gly141 each bind substrate; that span reads ADIK. Lys101 is subject to N6-acetyllysine; alternate. Residue Lys101 is modified to N6-succinyllysine; alternate. At Lys204 the chain carries N6-succinyllysine. N6-acetyllysine is present on Lys211.

The protein belongs to the enoyl-CoA hydratase/isomerase family. In terms of assembly, homohexamer; dimer of trimers.

Its subcellular location is the mitochondrion matrix. It catalyses the reaction a (3S)-3-hydroxyacyl-CoA = a (2E)-enoyl-CoA + H2O. The enzyme catalyses a (3E)-enoyl-CoA = a 4-saturated (2E)-enoyl-CoA. The catalysed reaction is (3E)-hexenoyl-CoA = (2E)-hexenoyl-CoA. It carries out the reaction (3S)-3-hydroxybutanoyl-CoA = (2E)-butenoyl-CoA + H2O. It catalyses the reaction 3-hydroxyisovaleryl-CoA = 3-methylbut-2-enoyl-CoA + H2O. The enzyme catalyses 3-hydroxypropanoyl-CoA = acryloyl-CoA + H2O. The catalysed reaction is 3-hydroxybutanoyl-CoA = (2E)-butenoyl-CoA + H2O. It carries out the reaction 2-methylpropenoyl-CoA + H2O = (S)-3-hydroxyisobutanoyl-CoA. It catalyses the reaction (3S)-hydroxyhexanoyl-CoA = (2E)-hexenoyl-CoA + H2O. The enzyme catalyses (3S)-hydroxydecanoyl-CoA = (2E)-decenoyl-CoA + H2O. It functions in the pathway lipid metabolism; fatty acid beta-oxidation. In terms of biological role, converts unsaturated trans-2-enoyl-CoA species ((2E)-enoyl-CoA) to the corresponding 3(S)-3-hydroxyacyl-CoA species through addition of a water molecule to the double bond. Catalyzes the hydration of medium- and short-chained fatty enoyl-CoA thioesters from 4 carbons long (C4) up to C16. Has high substrate specificity for crotonyl-CoA ((2E)-butenoyl-CoA) and moderate specificity for acryloyl-CoA, 3-methylcrotonyl-CoA (3-methyl-(2E)-butenoyl-CoA) and methacrylyl-CoA ((2E)-2-methylpropenoyl-CoA). Can bind tiglyl-CoA (2-methylcrotonoyl-CoA), but hydrates only a small amount of this substrate. Plays a key role in the beta-oxidation spiral of short- and medium-chain fatty acid oxidation. At a lower rate than the hydratase reaction, catalyzes the isomerase reaction of trans-3-enoyl-CoA species (such as (3E)-hexenoyl-CoA) to trans-2-enoyl-CoA species (such as (2E)-hexenoyl-CoA), which are subsequently hydrated to 3(S)-3-hydroxyacyl-CoA species (such as (3S)-hydroxyhexanoyl-CoA). This chain is Enoyl-CoA hydratase, mitochondrial (ECHS1), found in Bos taurus (Bovine).